The chain runs to 319 residues: Lipoyl synthase (319 aa).

A disordered region spans residues 1 to 24 (MAVVIDTVGARPRHPEKQANPDTP). Basic and acidic residues predominate over residues 13 to 24 (RHPEKQANPDTP). [4Fe-4S] cluster contacts are provided by Cys-58, Cys-63, Cys-69, Cys-84, Cys-88, Cys-91, and Ser-298. The Radical SAM core domain occupies 70–287 (WDKSHATFMI…EEIARAKGFL (218 aa)).

It belongs to the radical SAM superfamily. Lipoyl synthase family. [4Fe-4S] cluster is required as a cofactor.

It localises to the cytoplasm. The enzyme catalyses [[Fe-S] cluster scaffold protein carrying a second [4Fe-4S](2+) cluster] + N(6)-octanoyl-L-lysyl-[protein] + 2 oxidized [2Fe-2S]-[ferredoxin] + 2 S-adenosyl-L-methionine + 4 H(+) = [[Fe-S] cluster scaffold protein] + N(6)-[(R)-dihydrolipoyl]-L-lysyl-[protein] + 4 Fe(3+) + 2 hydrogen sulfide + 2 5'-deoxyadenosine + 2 L-methionine + 2 reduced [2Fe-2S]-[ferredoxin]. Its pathway is protein modification; protein lipoylation via endogenous pathway; protein N(6)-(lipoyl)lysine from octanoyl-[acyl-carrier-protein]: step 2/2. Catalyzes the radical-mediated insertion of two sulfur atoms into the C-6 and C-8 positions of the octanoyl moiety bound to the lipoyl domains of lipoate-dependent enzymes, thereby converting the octanoylated domains into lipoylated derivatives. This chain is Lipoyl synthase, found in Phenylobacterium zucineum (strain HLK1).